We begin with the raw amino-acid sequence, 180 residues long: MNNTISELAASIRSIPDYPKPGIIFRDITTLLGNPRAFRRAVDELVQPYAGTKIDKIAGMEARGFILGGAVAHQLSSGFVPIRKKGKLPHETVRIAYSLEYGVDEMEMHRDAVQPGEKVILVDDLIATGGTAVGATRLLRQIGAEVVGACFVIDLPDLGGRRKLEELGVVVHTLVEFSGH.

Belongs to the purine/pyrimidine phosphoribosyltransferase family. Homodimer.

It localises to the cytoplasm. It catalyses the reaction AMP + diphosphate = 5-phospho-alpha-D-ribose 1-diphosphate + adenine. Its pathway is purine metabolism; AMP biosynthesis via salvage pathway; AMP from adenine: step 1/1. In terms of biological role, catalyzes a salvage reaction resulting in the formation of AMP, that is energically less costly than de novo synthesis. The chain is Adenine phosphoribosyltransferase from Rhizobium johnstonii (strain DSM 114642 / LMG 32736 / 3841) (Rhizobium leguminosarum bv. viciae).